The chain runs to 449 residues: Type 3 secretion system ATPase (449 aa).

An ATP-binding site is contributed by 178–183 (GCGKTT).

This sequence belongs to the ATPase alpha/beta chains family. T3SS ATPase subfamily. The core secretion machinery of the T3SS is composed of approximately 20 different proteins, including cytoplasmic components, a base, an export apparatus and a needle. This subunit is part of the cytosolic complex. Forms homododecamers.

The protein resides in the cytoplasm. The enzyme catalyses ATP + H2O + cellular proteinSide 1 = ADP + phosphate + cellular proteinSide 2.. ATPase component of the type III secretion system (T3SS), also called injectisome, which is used to inject bacterial effector proteins into eukaryotic host cells. Acts as a molecular motor to provide the energy that is required for the export of proteins. Required for type III secretion apparatus (T3SA) formation, proper protein secretion, host cell invasion and virulence. May play a critical role in T3SS substrate recognition, disassembly of the effector/chaperone complex and unfolding of the effector in an ATP-dependent manner prior to secretion. The chain is Type 3 secretion system ATPase from Pseudomonas syringae pv. syringae.